Here is a 188-residue protein sequence, read N- to C-terminus: Elongation factor P (188 aa).

It belongs to the elongation factor P family.

The protein localises to the cytoplasm. It participates in protein biosynthesis; polypeptide chain elongation. Involved in peptide bond synthesis. Stimulates efficient translation and peptide-bond synthesis on native or reconstituted 70S ribosomes in vitro. Probably functions indirectly by altering the affinity of the ribosome for aminoacyl-tRNA, thus increasing their reactivity as acceptors for peptidyl transferase. In Pelodictyon phaeoclathratiforme (strain DSM 5477 / BU-1), this protein is Elongation factor P.